Reading from the N-terminus, the 342-residue chain is S-adenosylmethionine:tRNA ribosyltransferase-isomerase (342 aa).

Belongs to the QueA family. Monomer.

The protein localises to the cytoplasm. The enzyme catalyses 7-aminomethyl-7-carbaguanosine(34) in tRNA + S-adenosyl-L-methionine = epoxyqueuosine(34) in tRNA + adenine + L-methionine + 2 H(+). Its pathway is tRNA modification; tRNA-queuosine biosynthesis. Its function is as follows. Transfers and isomerizes the ribose moiety from AdoMet to the 7-aminomethyl group of 7-deazaguanine (preQ1-tRNA) to give epoxyqueuosine (oQ-tRNA). This Bacillus subtilis (strain 168) protein is S-adenosylmethionine:tRNA ribosyltransferase-isomerase.